Reading from the N-terminus, the 131-residue chain is Large ribosomal subunit protein bL17 (131 aa).

Belongs to the bacterial ribosomal protein bL17 family. Part of the 50S ribosomal subunit. Contacts protein L32.

The chain is Large ribosomal subunit protein bL17 from Finegoldia magna (strain ATCC 29328 / DSM 20472 / WAL 2508) (Peptostreptococcus magnus).